A 403-amino-acid polypeptide reads, in one-letter code: Tripartite motif-containing protein 59 (403 aa).

The segment at 10 to 60 (CPICYSIFEDPRVLPCSHTFCRNCLENVLQASGNFYIWRPLRIPLKCPNCR) adopts an RING-type zinc-finger fold. The B box-type zinc-finger motif lies at 92 to 134 (PDVVTCPEHYRQPLNVYCLLDKKLVCGHCLTIGQHHGHPIDDL). 4 residues coordinate Zn(2+): Cys-97, His-100, Cys-120, and His-126. Residues 163–246 (LIEKLEEQKC…TITTSLQDES (84 aa)) adopt a coiled-coil conformation. The chain crosses the membrane as a helical span at residues 329–349 (ILNIAIVSLISVILMLILLFN).

It belongs to the TRIM/RBCC family. Interacts with ECSIT. As to expression, moderately expressed in the spleen, brain and heart and very highly expressed in the testis.

It is found in the endoplasmic reticulum membrane. The enzyme catalyses S-ubiquitinyl-[E2 ubiquitin-conjugating enzyme]-L-cysteine + [acceptor protein]-L-lysine = [E2 ubiquitin-conjugating enzyme]-L-cysteine + N(6)-ubiquitinyl-[acceptor protein]-L-lysine.. The protein operates within protein modification; protein ubiquitination. Its function is as follows. E3 ubiquitin ligase involved in different processes such as development and immune response. Serves as a negative regulator for innate immune signaling pathways by suppressing RLR-induced activation of IRF3/7 and NF-kappa-B via interaction with adapter ECSIT. Regulates autophagy through modulating both the transcription and the ubiquitination of BECN1. On the one hand, regulates the transcription of BECN1 through negatively modulating the NF-kappa-B pathway. On the other hand, regulates TRAF6-mediated 'Lys-63'-linked ubiquitination of BECN1, thus affecting the formation of the BECN1-PIK3C3 complex. In addition, mediates 'Lys-48'-linked ubiquitination of TRAF6 and thereby promotes TRAF6 proteasomal degradation. Also acts as a critical regulator for early embryo development from blastocyst stage to gastrula through modulating F-actin assembly and WASH1 'Lys-63'-linked ubiquitination. This Mus musculus (Mouse) protein is Tripartite motif-containing protein 59 (Trim59).